Here is a 105-residue protein sequence, read N- to C-terminus: Spermatogenesis-associated protein 8 (105 aa).

As to expression, expressed at high levels in adult testis, at moderate levels in sperm and at low levels in fetal testis. Not detected in other tissues.

The chain is Spermatogenesis-associated protein 8 (SPATA8) from Homo sapiens (Human).